The sequence spans 389 residues: MRLVKKNVVINGIYEAGVRYPEPANISYLWNFGFFSLICLIIQLVSGILLAMHYSAHVDLAFNSIERLVREVDYGWLLRYIHANGASFFFIVVYIHMLRGLYFGSYQKPNAMLWVSGVVIFLLLIITGFLGYVLPWGQMSYWAATVITNLVTVLPVIGEDIVIWLWGGFNVDNPTLNRFFSLHYLCPFIIVGLVGLHIIFLRENGSTNPLGVKSHVDQIPFTPYFTIKDLFSFMIFLVLFFTFVFFAPNYLGHPDNYLMADSNVTPAHIVPEWYLLPFYAMLRSIPNKVLGVLALVLAIVVLAFLPFLTIAEVRSSYFRKIHKHLFWSFLALCFFLGFLGSQPAAAPYLICGLYSTIAYFIYILVLFPCIYIVEKMIIKTIMKTTVKKA.

8 helical membrane-spanning segments follow: residues 32-52 (FGFFSLICLIIQLVSGILLAM), 76-98 (WLLRYIHANGASFFFIVVYIHML), 113-133 (LWVSGVVIFLLLIITGFLGYV), 179-199 (FFSLHYLCPFIIVGLVGLHII), 225-245 (FTIKDLFSFMIFLVLFFTFVF), 290-310 (LGVLALVLAIVVLAFLPFLTI), 325-345 (LFWSFLALCFFLGFLGSQPAA), and 353-373 (LYSTIAYFIYILVLFPCIYIV). Residues H82 and H96 each coordinate heme b. The heme b site is built by H183 and H197.

The protein belongs to the cytochrome b family. The main subunits of complex b-c1 are: cytochrome b, cytochrome c1 and the Rieske protein. Heme b is required as a cofactor.

It is found in the mitochondrion inner membrane. Functionally, component of the ubiquinol-cytochrome c reductase complex (complex III or cytochrome b-c1 complex) that is part of the mitochondrial respiratory chain. The b-c1 complex mediates electron transfer from ubiquinol to cytochrome c. Contributes to the generation of a proton gradient across the mitochondrial membrane that is then used for ATP synthesis. The polypeptide is Cytochrome b (cytB) (Dictyostelium discoideum (Social amoeba)).